The chain runs to 121 residues: uncharacterized protein (121 aa).

The signal sequence occupies residues 1 to 23 (MNFSTVFQAIIAVLGLTTVTALA). N-linked (GlcNAc...) asparagine glycans are attached at residues Asn-68 and Asn-84.

In terms of processing, N-glycosylated.

This is an uncharacterized protein from Saccharomyces cerevisiae (strain ATCC 204508 / S288c) (Baker's yeast).